We begin with the raw amino-acid sequence, 459 residues long: Fe(3+)-Zn(2+) purple acid phosphatase (459 aa).

An N-terminal signal peptide occupies residues 1-22; sequence MGVVKGLLALALVLNVVVVSNG. Glycine 23 carries the blocked amino end (Gly) modification. Asparagine 108 is a glycosylation site (N-linked (GlcNAc...) asparagine; partial). The N-linked (GlcNAc...) asparagine glycan is linked to asparagine 136. Residue aspartate 162 participates in Fe cation binding. The N-linked (GlcNAc...) asparagine glycan is linked to asparagine 170. Positions 191 and 194 each coordinate Fe cation. Aspartate 191 serves as a coordination point for Zn(2+). Asparagine 228 contacts Zn(2+). Asparagine 238 carries an N-linked (GlcNAc...) asparagine glycan. Histidine 313 is a binding site for Zn(2+). Residue histidine 323 is the Proton donor of the active site. Residue histidine 350 participates in Zn(2+) binding. Fe cation is bound at residue histidine 352. Asparagine 423 carries an N-linked (GlcNAc...) asparagine glycan.

Belongs to the metallophosphoesterase superfamily. Purple acid phosphatase family. In terms of assembly, homodimer; disulfide-linked. The cofactor is Fe cation. Zn(2+) is required as a cofactor.

The protein localises to the secreted. It carries out the reaction a phosphate monoester + H2O = an alcohol + phosphate. Its activity is regulated as follows. Inhibited by compounds CC24201, CC27209, and MO07123. Inhibited by the tetraoxoanions molybdate and phosphate. Not inhibited by EDTA or tartrate. This Phaseolus vulgaris (Kidney bean) protein is Fe(3+)-Zn(2+) purple acid phosphatase.